The chain runs to 455 residues: Zinc finger protein ZPR1 homolog (455 aa).

2 C4-type zinc fingers span residues 28 to 60 (CPVCEEDGETRIMCTSIPYYRAVILMSFECPHC) and 247 to 279 (CPNCHGPTEVKMKPTDIPFFQTVIIMSLACDRC).

This sequence belongs to the ZPR1 family.

The protein resides in the nucleus. The sequence is that of Zinc finger protein ZPR1 homolog from Caenorhabditis elegans.